The sequence spans 190 residues: Ribosome-recycling factor (190 aa).

This sequence belongs to the RRF family.

The protein resides in the cytoplasm. Responsible for the release of ribosomes from messenger RNA at the termination of protein biosynthesis. May increase the efficiency of translation by recycling ribosomes from one round of translation to another. This Fusobacterium nucleatum subsp. nucleatum (strain ATCC 25586 / DSM 15643 / BCRC 10681 / CIP 101130 / JCM 8532 / KCTC 2640 / LMG 13131 / VPI 4355) protein is Ribosome-recycling factor.